Reading from the N-terminus, the 380-residue chain is Large ribosomal subunit protein mL38 (380 aa).

A mitochondrion-targeting transit peptide spans 1 to 26 (MAAPWWRVVLNGSRNWRGFSTSAALS). Positions 101-122 (QQLLERKRVLRELRTSVEEERA) form a coiled coil.

This sequence belongs to the phosphatidylethanolamine-binding protein family. Mitochondrion-specific ribosomal protein mL38 subfamily. As to quaternary structure, component of the mitochondrial ribosome large subunit (39S) which comprises a 16S rRNA and about 50 distinct proteins.

The protein localises to the mitochondrion. This Bos taurus (Bovine) protein is Large ribosomal subunit protein mL38 (MRPL38).